The primary structure comprises 133 residues: Thioredoxin-like protein CXXS1 (133 aa).

Positions 1-120 (MEIQQQKGVG…VKKMVDASAE (120 aa)) constitute a Thioredoxin domain.

It belongs to the thioredoxin family.

This is Thioredoxin-like protein CXXS1 from Oryza sativa subsp. japonica (Rice).